Consider the following 1085-residue polypeptide: Error-prone DNA polymerase 2 (1085 aa).

Residues 1040–1066 (AGRGDEFAHGGGGPDSRDRQKPVVPRD) are disordered.

Belongs to the DNA polymerase type-C family. DnaE2 subfamily.

It is found in the cytoplasm. It catalyses the reaction DNA(n) + a 2'-deoxyribonucleoside 5'-triphosphate = DNA(n+1) + diphosphate. DNA polymerase involved in damage-induced mutagenesis and translesion synthesis (TLS). It is not the major replicative DNA polymerase. The chain is Error-prone DNA polymerase 2 from Agrobacterium fabrum (strain C58 / ATCC 33970) (Agrobacterium tumefaciens (strain C58)).